Reading from the N-terminus, the 409-residue chain is Argininosuccinate synthase (409 aa).

Residues 8 to 16 (AYSGGLDTS) and alanine 34 each bind ATP. Residue tyrosine 85 coordinates L-citrulline. Glycine 115 provides a ligand contact to ATP. L-aspartate-binding residues include threonine 117, asparagine 121, and aspartate 122. Asparagine 121 contacts L-citrulline. 5 residues coordinate L-citrulline: arginine 125, serine 178, serine 187, glutamate 268, and tyrosine 280.

This sequence belongs to the argininosuccinate synthase family. Type 1 subfamily. In terms of assembly, homotetramer.

It localises to the cytoplasm. The catalysed reaction is L-citrulline + L-aspartate + ATP = 2-(N(omega)-L-arginino)succinate + AMP + diphosphate + H(+). Its pathway is amino-acid biosynthesis; L-arginine biosynthesis; L-arginine from L-ornithine and carbamoyl phosphate: step 2/3. This is Argininosuccinate synthase from Thermotoga petrophila (strain ATCC BAA-488 / DSM 13995 / JCM 10881 / RKU-1).